A 330-amino-acid polypeptide reads, in one-letter code: MTHILLLCGGGGTEHEVSLVSSKYISQQLSELDAFEITHLEIKDEGWFHIESGLKYELRSDKTLLSGETVSSPVDYVVPCIHGYPGETGDIQSMLDMLSIPYLGCDAESSTNSFNKITSKLWYDALGIPNTPYLFLTENNEETHQSALAAFKQWGGLFVKAACQGSSVGCYKVTSEAELSKAINDAFGYSQQVLVEKAVKPRELEVAAYEIDGQLFTTAPGEVTAPDGAFYTYDEKYGSGSHSTTSLDAQNLTEEQVKLIDQYSRKVFTQMKLKDLSRIDFFLTDDNEIYLNEVNTFPGMTPISMFPKLLEHNGDCFKTFLQKAVLNAIK.

The region spanning 120 to 326 (KLWYDALGIP…FKTFLQKAVL (207 aa)) is the ATP-grasp domain. 150 to 205 (AFKQWGGLFVKAACQGSSVGCYKVTSEAELSKAINDAFGYSQQVLVEKAVKPRELE) is a binding site for ATP. The Mg(2+) site is built by Asp-280, Glu-293, and Asn-295.

The protein belongs to the D-alanine--D-alanine ligase family. The cofactor is Mg(2+). It depends on Mn(2+) as a cofactor.

It localises to the cytoplasm. The catalysed reaction is 2 D-alanine + ATP = D-alanyl-D-alanine + ADP + phosphate + H(+). It functions in the pathway cell wall biogenesis; peptidoglycan biosynthesis. Cell wall formation. This is D-alanine--D-alanine ligase from Aliivibrio fischeri (strain ATCC 700601 / ES114) (Vibrio fischeri).